Reading from the N-terminus, the 127-residue chain is DNA-directed RNA polymerase subunit omega (127 aa).

Belongs to the RNA polymerase subunit omega family. As to quaternary structure, the RNAP catalytic core consists of 2 alpha, 1 beta, 1 beta' and 1 omega subunit. When a sigma factor is associated with the core the holoenzyme is formed, which can initiate transcription.

The enzyme catalyses RNA(n) + a ribonucleoside 5'-triphosphate = RNA(n+1) + diphosphate. In terms of biological role, promotes RNA polymerase assembly. Latches the N- and C-terminal regions of the beta' subunit thereby facilitating its interaction with the beta and alpha subunits. This chain is DNA-directed RNA polymerase subunit omega, found in Rickettsia africae (strain ESF-5).